The sequence spans 376 residues: O-demethylpuromycin-O-methyltransferase (376 aa).

A disordered region spans residues 1–28; that stretch reads MAPTEATRGGPADPAPAPEAHRGGHTEH. Residues 19-28 show a composition bias toward basic and acidic residues; the sequence is EAHRGGHTEH. Residues D235 and 261-263 each bind S-adenosyl-L-methionine; that span reads GDF. H281 serves as the catalytic Proton acceptor.

Belongs to the class I-like SAM-binding methyltransferase superfamily. Cation-independent O-methyltransferase family.

It catalyses the reaction O-demethylpuromycin + S-adenosyl-L-methionine = puromycin + S-adenosyl-L-homocysteine + H(+). This chain is O-demethylpuromycin-O-methyltransferase (dmpM), found in Streptomyces alboniger.